The sequence spans 450 residues: Glucose-6-phosphate isomerase (450 aa).

Glutamate 290 serves as the catalytic Proton donor. Residues histidine 311 and lysine 425 contribute to the active site.

Belongs to the GPI family.

The protein resides in the cytoplasm. It catalyses the reaction alpha-D-glucose 6-phosphate = beta-D-fructose 6-phosphate. It functions in the pathway carbohydrate biosynthesis; gluconeogenesis. It participates in carbohydrate degradation; glycolysis; D-glyceraldehyde 3-phosphate and glycerone phosphate from D-glucose: step 2/4. Functionally, catalyzes the reversible isomerization of glucose-6-phosphate to fructose-6-phosphate. The protein is Glucose-6-phosphate isomerase of Listeria innocua serovar 6a (strain ATCC BAA-680 / CLIP 11262).